A 265-amino-acid chain; its full sequence is AT-hook motif nuclear-localized protein 18 (265 aa).

The interval 1–75 (MDEVSRSHTP…AGSKNKPKAP (75 aa)) is disordered. The span at 19 to 30 (HYHHQNAGRQKR) shows a compositional bias: basic residues. The segment at residues 59-71 (RRPRGRPAGSKNK) is a DNA-binding region (a.T hook). Residues 83-217 (ANAFRCHVME…EEEETEREID (135 aa)) enclose the PPC domain.

It is found in the nucleus. Its function is as follows. Transcription factor that specifically binds AT-rich DNA sequences related to the nuclear matrix attachment regions (MARs). Acts redundantly with AHL22, AHL27 and AHL29 in the regulation of flowering and regulation of the hypocotyl elongation. The protein is AT-hook motif nuclear-localized protein 18 of Arabidopsis thaliana (Mouse-ear cress).